A 237-amino-acid chain; its full sequence is V-type proton ATPase subunit E3 (237 aa).

N-acetylmethionine is present on methionine 1. Positions 9 to 67 (QIQQMVRFIRQEAEEKANEISISSEEEFNIEKLQLVEAEKKKIRQEYEKKEKQVDVRKK) form a coiled coil.

The protein belongs to the V-ATPase E subunit family. In terms of assembly, V-ATPase is a heteromultimeric enzyme composed of a peripheral catalytic V1 complex (components A to H) attached to an integral membrane V0 proton pore complex (components: a, c, c'', d and e).

It is found in the vacuole membrane. In terms of biological role, subunit of the peripheral V1 complex of vacuolar ATPase essential for assembly or catalytic function. V-ATPase is responsible for acidifying a variety of intracellular compartments in eukaryotic cells. The protein is V-type proton ATPase subunit E3 (VHA-E3) of Arabidopsis thaliana (Mouse-ear cress).